A 456-amino-acid polypeptide reads, in one-letter code: CCA-adding enzyme (456 aa).

Residues S53 and K56 each coordinate ATP. Positions 53 and 56 each coordinate CTP. Positions 65, 67, and 119 each coordinate Mg(2+). Residues H142, K161, and Y170 each contribute to the ATP site. CTP-binding residues include H142, K161, and Y170.

Belongs to the tRNA nucleotidyltransferase/poly(A) polymerase family. Archaeal CCA-adding enzyme subfamily. As to quaternary structure, homodimer. The cofactor is Mg(2+).

It carries out the reaction a tRNA precursor + 2 CTP + ATP = a tRNA with a 3' CCA end + 3 diphosphate. The enzyme catalyses a tRNA with a 3' CCA end + 2 CTP + ATP = a tRNA with a 3' CCACCA end + 3 diphosphate. Its function is as follows. Catalyzes the addition and repair of the essential 3'-terminal CCA sequence in tRNAs without using a nucleic acid template. Adds these three nucleotides in the order of C, C, and A to the tRNA nucleotide-73, using CTP and ATP as substrates and producing inorganic pyrophosphate. tRNA 3'-terminal CCA addition is required both for tRNA processing and repair. Also involved in tRNA surveillance by mediating tandem CCA addition to generate a CCACCA at the 3' terminus of unstable tRNAs. While stable tRNAs receive only 3'-terminal CCA, unstable tRNAs are marked with CCACCA and rapidly degraded. This Thermococcus kodakarensis (strain ATCC BAA-918 / JCM 12380 / KOD1) (Pyrococcus kodakaraensis (strain KOD1)) protein is CCA-adding enzyme.